The chain runs to 153 residues: TM2 domain-containing protein DDB_G0277895 (153 aa).

Residues 3–50 (QKSVCVTYLLWLFFGLFGIHRFYLNRPCSGVLYLFTCGCFFIGWFIDI) form the TM2 domain. Helical transmembrane passes span 6–26 (VCVT…RFYL) and 33–53 (VLYL…ICLI). The segment at 85–153 (GSPQQQPYGA…GNYPPPYGPQ (69 aa)) is disordered. 6 repeat units span residues 89-96 (QQPYGAPP), 97-104 (QQPYGAPP), 105-112 (QQPYGAPP), 113-120 (QQPYGAPP), 121-128 (QQPYGAPP), and 129-136 (PQPYGAPP). A 6 X 8 AA tandem repeat of Q-Q-P-Y-G-A-P-P region spans residues 89–136 (QQPYGAPPQQPYGAPPQQPYGAPPQQPYGAPPQQPYGAPPPQPYGAPP). Pro residues predominate over residues 93–153 (GAPPQQPYGA…GNYPPPYGPQ (61 aa)).

Belongs to the TM2 family.

It is found in the membrane. The sequence is that of TM2 domain-containing protein DDB_G0277895 from Dictyostelium discoideum (Social amoeba).